The following is a 179-amino-acid chain: Ribosome maturation factor RimM (179 aa).

One can recognise a PRC barrel domain in the interval 102 to 173 (PEEYHYRDLI…ALHVQPPPGL (72 aa)).

It belongs to the RimM family. As to quaternary structure, binds ribosomal protein uS19.

The protein resides in the cytoplasm. In terms of biological role, an accessory protein needed during the final step in the assembly of 30S ribosomal subunit, possibly for assembly of the head region. Essential for efficient processing of 16S rRNA. May be needed both before and after RbfA during the maturation of 16S rRNA. It has affinity for free ribosomal 30S subunits but not for 70S ribosomes. The polypeptide is Ribosome maturation factor RimM (Synechococcus sp. (strain JA-2-3B'a(2-13)) (Cyanobacteria bacterium Yellowstone B-Prime)).